The following is a 443-amino-acid chain: MIKNPKLLTKSFLRSFAILGGVGLVIHIAIYLTFPFYYIQLEGEKFNESARVFTEYLKTKTSDEIPSLLQSYSKSLTISAHLKRDIVDKRLPLVHDLDIKDGKLSNYIVMLDMSVSTADGKQVTVQFVHGVDVYKEAKNILLLYLPYTFLVTIAFSFVFSYFYTKRLLNPLFYISEVTSKMQDLDDNIRFDESRKDEVGEVGKQINGMYEHLLKVIHELESRNEQIVKLQNQKVSFVRGASHELKTPLASLRIILENMQHNIGDYKDHPKYIAKSINKIDQMSHLLEEVLESSKFQEWTECRETLTVKPVLVDILSRYQELAHSIGVTIENQLTDATRVVMSLRALDKVLTNLISNAIKYSDKNGRVIISEQDGYLSIKNTCAPLSDQELEHLFDIFYHSQIVTDKDESSGLGLYIVNNILESYQMDYSFLPYEHGMEFKISL.

2 consecutive transmembrane segments (helical) span residues 16 to 36 and 140 to 160; these read FAILGGVGLVIHIAIYLTFPF and ILLLYLPYTFLVTIAFSFVFS. One can recognise an HAMP domain in the interval 165-217; the sequence is KRLLNPLFYISEVTSKMQDLDDNIRFDESRKDEVGEVGKQINGMYEHLLKVIH. One can recognise a Histidine kinase domain in the interval 239–443; sequence GASHELKTPL…EHGMEFKISL (205 aa). At H242 the chain carries Phosphohistidine; by autocatalysis.

The protein resides in the cell membrane. It carries out the reaction ATP + protein L-histidine = ADP + protein N-phospho-L-histidine.. In terms of biological role, member of the two-component regulatory system HK06/RR06 involved in regulation of target genes, including choline-binding protein CbpA. Has been shown in one study to not be required for regulation of expression of choline-binding protein CbpA. The polypeptide is Sensor histidine protein kinase HK06 (Streptococcus pneumoniae serotype 2 (strain D39 / NCTC 7466)).